The following is a 220-amino-acid chain: Peptide methionine sulfoxide reductase MsrA (220 aa).

Residue Cys52 is part of the active site.

It belongs to the MsrA Met sulfoxide reductase family.

The enzyme catalyses L-methionyl-[protein] + [thioredoxin]-disulfide + H2O = L-methionyl-(S)-S-oxide-[protein] + [thioredoxin]-dithiol. It catalyses the reaction [thioredoxin]-disulfide + L-methionine + H2O = L-methionine (S)-S-oxide + [thioredoxin]-dithiol. Functionally, has an important function as a repair enzyme for proteins that have been inactivated by oxidation. Catalyzes the reversible oxidation-reduction of methionine sulfoxide in proteins to methionine. In Corynebacterium diphtheriae (strain ATCC 700971 / NCTC 13129 / Biotype gravis), this protein is Peptide methionine sulfoxide reductase MsrA.